Consider the following 223-residue polypeptide: Phosphoglycolate phosphatase (223 aa).

The active-site Nucleophile is aspartate 10. Positions 10 and 12 each coordinate Mg(2+). Lysine 149 is a substrate binding site. Positions 172 and 176 each coordinate Mg(2+).

It belongs to the archaeal SPP-like hydrolase family. It depends on Mg(2+) as a cofactor.

It catalyses the reaction 2-phosphoglycolate + H2O = glycolate + phosphate. Functionally, catalyzes the dephosphorylation of 2-phosphoglycolate. This chain is Phosphoglycolate phosphatase, found in Archaeoglobus fulgidus (strain ATCC 49558 / DSM 4304 / JCM 9628 / NBRC 100126 / VC-16).